The following is a 643-amino-acid chain: Transmembrane protein 62 (643 aa).

Residues 9-29 (VVAGLAAAAVAALLLEHYGLA) form a helical membrane-spanning segment. An N-linked (GlcNAc...) asparagine glycan is attached at Asn180. 4 helical membrane-spanning segments follow: residues 431 to 451 (IVAR…LITF), 484 to 504 (YSVL…GEII), 532 to 552 (GIIQ…WSLL), and 572 to 592 (IIPV…SCYF).

It localises to the membrane. The chain is Transmembrane protein 62 (Tmem62) from Mus musculus (Mouse).